Here is a 297-residue protein sequence, read N- to C-terminus: XIAP-associated factor 1 (297 aa).

The TRAF-type zinc finger occupies 22 to 99 (LHEAHCLMYL…QLAVRLNKVD (78 aa)). The tract at residues 178-255 (AVTPSPVGKP…NGKLRASSPV (78 aa)) is disordered. A compositionally biased stretch (basic and acidic residues) spans 202-212 (QTSKAEKDVRP). The span at 229-245 (RQAPRGTNKTTNLSLKS) shows a compositional bias: polar residues.

In terms of assembly, interacts with BIRC1, BIRC2, BIRC3, BIRC4, BIRC7 and BIRC8. Part of an complex consisting of BIRC4, XAF1 and BIRC5; the complex formation requires IFN-beta stimulation. Interacts with RNF114, the interaction increases XAF1 stability and proapoptotic effects, and may regulate IFN signaling.

The protein resides in the cytoplasm. It localises to the nucleus. The protein localises to the mitochondrion. Its function is as follows. Seems to function as a negative regulator of members of the IAP (inhibitor of apoptosis protein) family. Inhibits anti-caspase activity of BIRC4. Induces cleavage and inactivation of BIRC4 independent of caspase activation. Mediates TNF-alpha-induced apoptosis and is involved in apoptosis in trophoblast cells. May inhibit BIRC4 indirectly by activating the mitochondrial apoptosis pathway. After translocation to mitochondria, promotes translocation of BAX to mitochondria and cytochrome c release from mitochondria. Seems to promote the redistribution of BIRC4 from the cytoplasm to the nucleus, probably independent of BIRC4 inactivation which seems to occur in the cytoplasm. The BIRC4-XAF1 complex mediates down-regulation of BIRC5/survivin; the process requires the E3 ligase activity of BIRC4. Seems to be involved in cellular sensitivity to the proapoptotic actions of TRAIL. May be a tumor suppressor by mediating apoptosis resistance of cancer cells. In Bos taurus (Bovine), this protein is XIAP-associated factor 1 (XAF1).